Here is a 693-residue protein sequence, read N- to C-terminus: Heat shock protein homolog SSE1 (693 aa).

A disordered region spans residues 665–693 (LAEKLAAQRKAESEKKESKADAEGDVELD). Positions 673-686 (RKAESEKKESKADA) are enriched in basic and acidic residues.

The protein belongs to the heat shock protein 70 family.

It localises to the cytoplasm. This chain is Heat shock protein homolog SSE1 (SSE1), found in Lachancea kluyveri (strain ATCC 58438 / CBS 3082 / BCRC 21498 / NBRC 1685 / JCM 7257 / NCYC 543 / NRRL Y-12651) (Yeast).